The sequence spans 195 residues: Interferon tau (195 aa).

The first 23 residues, 1–23 (MAFVLSLLMALVLASYSPGGSLG), serve as a signal peptide directing secretion. 2 disulfides stabilise this stretch: Cys-24–Cys-122 and Cys-52–Cys-162.

It belongs to the alpha/beta interferon family. IFN-alphaII subfamily. Constitutively and exclusively expressed in the mononuclear cells of the extraembryonic trophectoderm.

The protein localises to the secreted. Functionally, paracrine hormone primarily responsible for maternal recognition of pregnancy. Interacts with endometrial receptors, probably type I interferon receptors, and blocks estrogen receptor expression, preventing the estrogen-induced increase in oxytocin receptor expression in the endometrium. This results in the suppression of the pulsatile endometrial release of the luteolytic hormone prostaglandin F2-alpha, hindering the regression of the corpus luteum (luteolysis) and therefore a return to ovarian cyclicity. This, and a possible direct effect of IFN-tau on prostaglandin synthesis, leads in turn to continued ovarian progesterone secretion, which stimulates the secretion by the endometrium of the nutrients required for the growth of the conceptus. In summary, displays particularly high antiviral and antiproliferative potency concurrently with particular weak cytotoxicity, high antiluteolytic activity and immunomodulatory properties. In contrast with other IFNs, IFN-tau is not virally inducible. In Cervus elaphus (Red deer), this protein is Interferon tau (IFNT).